The primary structure comprises 239 residues: TPR repeat-containing protein TP_0282 (239 aa).

The chain crosses the membrane as a helical span at residues 21–43 (LLVGVLVAILGGLGLSAGCLLVM). 2 TPR repeats span residues 112-145 (AYAQACVADIFFARKEWEKAQQAYVRAAYGARRS) and 149-182 (GVYYFNAASCADERGRFEEARELYQRSARVQDFP).

The protein localises to the cell membrane. This is TPR repeat-containing protein TP_0282 from Treponema pallidum (strain Nichols).